The chain runs to 138 residues: Large ribosomal subunit protein uL16 (138 aa).

Basic residues predominate over residues 1 to 16 (MLIPKRVKYRRQHRPT). Residues 1-23 (MLIPKRVKYRRQHRPTRSGVSKG) form a disordered region.

This sequence belongs to the universal ribosomal protein uL16 family. Part of the 50S ribosomal subunit.

Binds 23S rRNA and is also seen to make contacts with the A and possibly P site tRNAs. In Corynebacterium aurimucosum (strain ATCC 700975 / DSM 44827 / CIP 107346 / CN-1) (Corynebacterium nigricans), this protein is Large ribosomal subunit protein uL16.